Here is a 148-residue protein sequence, read N- to C-terminus: Basic leucine zipper 4 (148 aa).

Residues 48–97 (DDKKRRRTISNRESAKRSRMKKKKRFEELTEEVNRLNIRNQELKNRLANV) form the bZIP domain. Residues 50-70 (KKRRRTISNRESAKRSRMKKK) form a disordered region. Positions 50-72 (KKRRRTISNRESAKRSRMKKKKR) are basic motif. Residues 76-90 (LTEEVNRLNIRNQEL) are leucine-zipper.

It localises to the nucleus. Functionally, probable transcription factor involved in somatic embryogenesis. Acts as a positive regulator of BHLH109. The protein is Basic leucine zipper 4 of Arabidopsis thaliana (Mouse-ear cress).